The following is a 1025-amino-acid chain: Multidrug resistance protein MdtC (1025 aa).

A run of 12 helical transmembrane segments spans residues 3–23, 333–353, 360–380, 387–407, 431–451, 463–483, 528–548, 853–873, 875–895, 897–917, 953–973, and 984–1004; these read FFALFIYRPVATILLSVAITL, EVEQTLIISVALVILVVFLFL, IIPAVAVPVSLIGTFAAMYLC, LSLMALTIATGFVVDDAIVVL, VGFTVLSMSLSLVAVFLPLLL, FAVTLSVAIGISLLVSLTLTP, LVGVVLLGTIALNIWLYISIP, VILIIAAIATVYIVLGILYES, VHPLTILSTLPSAGVGALLAL, LFNAPFSLIALIGIMLLIGIV, PIMMTTLAALFGALPLVLSGG, and ITIVGGLVMSQLLTLYTTPVV.

Belongs to the resistance-nodulation-cell division (RND) (TC 2.A.6) family. MdtC subfamily. As to quaternary structure, part of a tripartite efflux system composed of MdtA, MdtB and MdtC. MdtC forms a heteromultimer with MdtB.

It localises to the cell inner membrane. The MdtABC tripartite complex confers resistance against novobiocin and deoxycholate. In Escherichia coli (strain 55989 / EAEC), this protein is Multidrug resistance protein MdtC.